The sequence spans 381 residues: Probable tRNA sulfurtransferase (381 aa).

One can recognise a THUMP domain in the interval 52 to 155 (LTNLDALKYV…DASTYIFIDY (104 aa)). ATP-binding positions include 173–174 (LM), 198–199 (NF), Arg255, Gly277, and Gln286.

This sequence belongs to the ThiI family.

It localises to the cytoplasm. The enzyme catalyses [ThiI sulfur-carrier protein]-S-sulfanyl-L-cysteine + a uridine in tRNA + 2 reduced [2Fe-2S]-[ferredoxin] + ATP + H(+) = [ThiI sulfur-carrier protein]-L-cysteine + a 4-thiouridine in tRNA + 2 oxidized [2Fe-2S]-[ferredoxin] + AMP + diphosphate. It carries out the reaction [ThiS sulfur-carrier protein]-C-terminal Gly-Gly-AMP + S-sulfanyl-L-cysteinyl-[cysteine desulfurase] + AH2 = [ThiS sulfur-carrier protein]-C-terminal-Gly-aminoethanethioate + L-cysteinyl-[cysteine desulfurase] + A + AMP + 2 H(+). The protein operates within cofactor biosynthesis; thiamine diphosphate biosynthesis. In terms of biological role, catalyzes the ATP-dependent transfer of a sulfur to tRNA to produce 4-thiouridine in position 8 of tRNAs, which functions as a near-UV photosensor. Also catalyzes the transfer of sulfur to the sulfur carrier protein ThiS, forming ThiS-thiocarboxylate. This is a step in the synthesis of thiazole, in the thiamine biosynthesis pathway. The sulfur is donated as persulfide by IscS. The protein is Probable tRNA sulfurtransferase of Metamycoplasma arthritidis (strain 158L3-1) (Mycoplasma arthritidis).